The following is a 249-amino-acid chain: Exosome complex component Rrp41 (249 aa).

The protein belongs to the RNase PH family. Rrp41 subfamily. Component of the archaeal exosome complex. Forms a hexameric ring-like arrangement composed of 3 Rrp41-Rrp42 heterodimers. The hexameric ring associates with a trimer of Rrp4 and/or Csl4 subunits.

The protein resides in the cytoplasm. In terms of biological role, catalytic component of the exosome, which is a complex involved in RNA degradation. Has 3'-&gt;5' exoribonuclease activity. Can also synthesize heteromeric RNA-tails. This chain is Exosome complex component Rrp41, found in Thermococcus onnurineus (strain NA1).